Consider the following 307-residue polypeptide: 1-phosphofructokinase (307 aa).

ATP is bound by residues 217-222 (SMGSDG) and 249-250 (GD). Aspartate 250 acts as the Proton acceptor in catalysis.

This sequence belongs to the carbohydrate kinase PfkB family.

It catalyses the reaction beta-D-fructose 1-phosphate + ATP = beta-D-fructose 1,6-bisphosphate + ADP + H(+). Catalyzes the ATP-dependent phosphorylation of fructose-l-phosphate to fructose-l,6-bisphosphate. In Borreliella burgdorferi (strain ATCC 35210 / DSM 4680 / CIP 102532 / B31) (Borrelia burgdorferi), this protein is 1-phosphofructokinase (fruK).